Consider the following 296-residue polypeptide: Ribosome biogenesis GTPase A (296 aa).

Residues 14–178 (RRQVTEKLKL…LLDTPGILWP (165 aa)) enclose the CP-type G domain. GTP-binding positions include 58–61 (NKAD), 130–135 (NVGKST), and Gly174.

This sequence belongs to the TRAFAC class YlqF/YawG GTPase family. MTG1 subfamily. In terms of assembly, interacts with ctc. Interacts with the immature 50S ribosome subunit. 2 molecules of rbgA bind to one 50S subunit.

The protein resides in the cytoplasm. Functionally, essential protein that is required for a late step of 50S ribosomal subunit assembly. Has GTPase activity that is stimulated by interaction with the immature 50S ribosome subunit. Binds to the 23S rRNA. Required for the association of ribosomal proteins rplP and rpmA with the large subunit. The sequence is that of Ribosome biogenesis GTPase A from Bacillus cereus (strain ATCC 14579 / DSM 31 / CCUG 7414 / JCM 2152 / NBRC 15305 / NCIMB 9373 / NCTC 2599 / NRRL B-3711).